A 99-amino-acid chain; its full sequence is Large ribosomal subunit protein bL27 (99 aa).

Residues 1–9 (MLIMNLQLF) constitute a propeptide that is removed on maturation.

Belongs to the bacterial ribosomal protein bL27 family. Post-translationally, the N-terminus is cleaved by ribosomal processing cysteine protease Prp.

The chain is Large ribosomal subunit protein bL27 from Clostridium botulinum (strain Eklund 17B / Type B).